The chain runs to 97 residues: Integration host factor subunit alpha (97 aa).

The protein belongs to the bacterial histone-like protein family. As to quaternary structure, heterodimer of an alpha and a beta chain.

In terms of biological role, this protein is one of the two subunits of integration host factor, a specific DNA-binding protein that functions in genetic recombination as well as in transcriptional and translational control. This Colwellia psychrerythraea (strain 34H / ATCC BAA-681) (Vibrio psychroerythus) protein is Integration host factor subunit alpha.